Consider the following 537-residue polypeptide: P2Y purinoceptor 4 (537 aa).

Residues Met-1–Ser-49 are Extracellular-facing. N-linked (GlcNAc...) asparagine glycosylation is found at Asn-26 and Asn-29. A helical membrane pass occupies residues Tyr-50 to Ala-70. Residues Lys-71–Thr-79 lie on the Cytoplasmic side of the membrane. The chain crosses the membrane as a helical span at residues Val-80–Val-100. Residues Tyr-101 to Leu-118 are Extracellular-facing. Cysteines 116 and 193 form a disulfide. A helical membrane pass occupies residues Val-119–Val-139. At His-140–Tyr-161 the chain is on the cytoplasmic side. The chain crosses the membrane as a helical span at residues Val-162–Val-182. Residues Thr-183–Thr-210 are Extracellular-facing. Residues Ala-211 to Met-231 traverse the membrane as a helical segment. Residues Thr-232–Ser-254 are Cytoplasmic-facing. A helical membrane pass occupies residues Ile-255–Thr-275. Topologically, residues Arg-276–Leu-292 are extracellular. A helical transmembrane segment spans residues Asn-293–Leu-316. Over Tyr-317–Ala-537 the chain is Cytoplasmic. The tract at residues Asn-401–Leu-505 is disordered. Composition is skewed to basic and acidic residues over residues Asn-409–Glu-423 and Val-431–Thr-447. Residues Glu-448 to Asp-465 show a composition bias toward polar residues.

This sequence belongs to the G-protein coupled receptor 1 family.

It is found in the cell membrane. In terms of biological role, receptor for extracellular ATP, UTP, CTP, GTP and ITP. The activity of this receptor is mediated by G proteins which activate a phosphatidylinositol-calcium second messenger system. May play a key role in the early development of neural tissue. This is P2Y purinoceptor 4 (p2ry4) from Xenopus laevis (African clawed frog).